The primary structure comprises 87 residues: UPF0367 protein P9211_01391 (87 aa).

It belongs to the UPF0367 family.

In Prochlorococcus marinus (strain MIT 9211), this protein is UPF0367 protein P9211_01391.